The following is a 197-amino-acid chain: 3-isopropylmalate dehydratase small subunit (197 aa).

Belongs to the LeuD family. LeuD type 1 subfamily. As to quaternary structure, heterodimer of LeuC and LeuD.

It carries out the reaction (2R,3S)-3-isopropylmalate = (2S)-2-isopropylmalate. It functions in the pathway amino-acid biosynthesis; L-leucine biosynthesis; L-leucine from 3-methyl-2-oxobutanoate: step 2/4. Functionally, catalyzes the isomerization between 2-isopropylmalate and 3-isopropylmalate, via the formation of 2-isopropylmaleate. This Mycobacterium sp. (strain KMS) protein is 3-isopropylmalate dehydratase small subunit.